The chain runs to 335 residues: NADH-ubiquinone oxidoreductase chain 2 (335 aa).

The next 11 helical transmembrane spans lie at 7-27 (PTMA…VSSA), 28-48 (NWMF…PIMM), 58-78 (GAVK…MSST), 81-101 (WMTF…AIML), 110-130 (FWYP…LSSW), 147-167 (NMNF…VIGM), 174-194 (TIMA…AAVY), 200-220 (IMYF…MGYL), 240-260 (MALL…GFMP), 274-294 (IILL…LNII), and 315-335 (SLKF…FIML).

This sequence belongs to the complex I subunit 2 family.

It is found in the mitochondrion inner membrane. The enzyme catalyses a ubiquinone + NADH + 5 H(+)(in) = a ubiquinol + NAD(+) + 4 H(+)(out). Core subunit of the mitochondrial membrane respiratory chain NADH dehydrogenase (Complex I) that is believed to belong to the minimal assembly required for catalysis. Complex I functions in the transfer of electrons from NADH to the respiratory chain. The immediate electron acceptor for the enzyme is believed to be ubiquinone. The protein is NADH-ubiquinone oxidoreductase chain 2 (ND2) of Lumbricus terrestris (Common earthworm).